A 716-amino-acid chain; its full sequence is DNA ligase (716 aa).

NAD(+)-binding positions include 50–54 (DAEYD), 99–100 (SL), and Glu-132. The N6-AMP-lysine intermediate role is filled by Lys-134. Residues Arg-155, Glu-192, Lys-308, and Lys-332 each coordinate NAD(+). Zn(2+) is bound by residues Cys-437, Cys-439, Cys-461, and Cys-467. The 79-residue stretch at 638–716 (KSNSAVAGKT…EDEWLKLIGE (79 aa)) folds into the BRCT domain.

The protein belongs to the NAD-dependent DNA ligase family. LigA subfamily. It depends on Mg(2+) as a cofactor. Requires Mn(2+) as cofactor.

It carries out the reaction NAD(+) + (deoxyribonucleotide)n-3'-hydroxyl + 5'-phospho-(deoxyribonucleotide)m = (deoxyribonucleotide)n+m + AMP + beta-nicotinamide D-nucleotide.. Functionally, DNA ligase that catalyzes the formation of phosphodiester linkages between 5'-phosphoryl and 3'-hydroxyl groups in double-stranded DNA using NAD as a coenzyme and as the energy source for the reaction. It is essential for DNA replication and repair of damaged DNA. The sequence is that of DNA ligase from Bradyrhizobium diazoefficiens (strain JCM 10833 / BCRC 13528 / IAM 13628 / NBRC 14792 / USDA 110).